The sequence spans 435 residues: Polyadenylate-binding protein RBP47B (435 aa).

The segment covering 1 to 15 (MQTTNGSDSTLATSG) has biased composition (polar residues). 2 disordered regions span residues 1–41 (MQTT…QQWM) and 85–104 (YGSY…RGSG). Positions 29–41 (QWQQQQQQQQQWM) are enriched in low complexity. RRM domains are found at residues 108–188 (KTLW…WASF), 202–281 (LSVF…IATP), and 321–393 (ATIF…WGRS). Positions 392-412 (RSPNKQWRGDSGQQWNGGYSR) are disordered.

It belongs to the polyadenylate-binding RBP47 family. In terms of assembly, interacts with the poly(A) tail of mRNA in nucleus. In terms of tissue distribution, expressed at low levels in leaves, stems, flowers, and seedlings.

Its subcellular location is the nucleus. The protein resides in the cytoplasmic granule. Functionally, heterogeneous nuclear ribonucleoprotein (hnRNP)-protein binding the poly(A) tail of mRNA and probably involved in some steps of pre-mRNA maturation. The protein is Polyadenylate-binding protein RBP47B (RBP47B) of Arabidopsis thaliana (Mouse-ear cress).